Here is an 889-residue protein sequence, read N- to C-terminus: 97 kDa heat shock protein (889 aa).

Disordered stretches follow at residues 504-622 (EDAM…ATTD) and 812-889 (FVCD…MELD). Residues 549–585 (SADKEEQADNGSKETSKDSKDQTSESSKSDKESKDQN) show a composition bias toward basic and acidic residues. Residues 586-597 (SEGSKSDNSSTE) are compositionally biased toward polar residues. Positions 869 to 889 (ASKEGETKPDETKPDVEMELD) are enriched in basic and acidic residues.

It belongs to the heat shock protein 70 family.

Its function is as follows. Cell surface recognition protein that binds acrosome-reacted sperm and thereby mediates binding and subsequent fusion of the sperm and egg. In Strongylocentrotus purpuratus (Purple sea urchin), this protein is 97 kDa heat shock protein.